The primary structure comprises 133 residues: Nickel-responsive regulator (133 aa).

4 residues coordinate Ni(2+): His-76, His-87, His-89, and Cys-95.

The protein belongs to the transcriptional regulatory CopG/NikR family. Homotetramer. Ni(2+) is required as a cofactor.

In terms of biological role, transcriptional repressor of the nikABCDE operon. Is active in the presence of excessive concentrations of intracellular nickel. The chain is Nickel-responsive regulator from Escherichia coli (strain SMS-3-5 / SECEC).